A 129-amino-acid chain; its full sequence is Glycine cleavage system H protein (129 aa).

Positions 24–106 (LVRVGISAFA…HGEGWLLVVR (83 aa)) constitute a Lipoyl-binding domain. Residue lysine 65 is modified to N6-lipoyllysine.

It belongs to the GcvH family. The glycine cleavage system is composed of four proteins: P, T, L and H. (R)-lipoate serves as cofactor.

Its function is as follows. The glycine cleavage system catalyzes the degradation of glycine. The H protein shuttles the methylamine group of glycine from the P protein to the T protein. The polypeptide is Glycine cleavage system H protein (Prochlorococcus marinus (strain MIT 9303)).